The primary structure comprises 259 residues: 3'-5' ssDNA/RNA exonuclease TatD (259 aa).

3 residues coordinate a divalent metal cation: Glu-92, His-128, and His-153.

This sequence belongs to the metallo-dependent hydrolases superfamily. TatD-type hydrolase family. TatD subfamily. In terms of assembly, monomer. Requires Mg(2+) as cofactor.

Its subcellular location is the cytoplasm. In terms of biological role, 3'-5' exonuclease that prefers single-stranded DNA and RNA. May play a role in the H(2)O(2)-induced DNA damage repair. The polypeptide is 3'-5' ssDNA/RNA exonuclease TatD (Erwinia amylovora (strain ATCC 49946 / CCPPB 0273 / Ea273 / 27-3)).